We begin with the raw amino-acid sequence, 334 residues long: Iron-uptake system permease protein FeuB (334 aa).

The next 9 helical transmembrane spans lie at 9–29 (IILITSPFAIALSLLLSILYG), 63–83 (AAGALLIGAALAVSGALMQGI), 91–111 (PSIMGVSDGSAFIITLCMVLL), 119–139 (MMIYSFIGSALGAVLVFGLAA), 150–170 (LAIIGTVTSMLLSSLSAAMSI), 191–211 (PDFLKLAAPFFLIGIIMAISL), 243–263 (VIILTGSAVALAGKIAFVGLV), 281–301 (PCSCILGGIFLTLCDLASRFI), and 305–325 (FETPIEVVTSIIGVPFFLYLI).

This sequence belongs to the binding-protein-dependent transport system permease family. FecCD subfamily. The complex is composed of one ATP-binding protein (YusV), two transmembrane proteins (FeuB and FeuC) and a solute-binding protein (FeuA).

Its subcellular location is the cell membrane. The protein resides in the membrane raft. Functionally, involved in the uptake of iron. Probably responsible for the translocation of the substrate across the membrane. In terms of biological role, part of the ABC transporter complex FeuABC/YusV involved in import of the catecholate siderophores bacillibactin and enterobactin. The chain is Iron-uptake system permease protein FeuB (feuB) from Bacillus subtilis (strain 168).